A 224-amino-acid polypeptide reads, in one-letter code: Putative O-methyltransferase MT1258 (224 aa).

The segment covering 1 to 10 (MDGTPGHDDM) has biased composition (basic and acidic residues). Residues 1-21 (MDGTPGHDDMPGQPAPSRGES) are disordered. S-adenosyl-L-methionine-binding positions include Val51, Glu73, 75-76 (GT), Ser81, Asp99, and Ile100. Residue Asp147 coordinates substrate. Asp149 contributes to the S-adenosyl-L-methionine binding site.

It belongs to the class I-like SAM-binding methyltransferase superfamily. Cation-dependent O-methyltransferase family.

The chain is Putative O-methyltransferase MT1258 from Mycobacterium tuberculosis (strain CDC 1551 / Oshkosh).